Here is a 621-residue protein sequence, read N- to C-terminus: DNA mismatch repair protein MutL (621 aa).

Belongs to the DNA mismatch repair MutL/HexB family.

Its function is as follows. This protein is involved in the repair of mismatches in DNA. It is required for dam-dependent methyl-directed DNA mismatch repair. May act as a 'molecular matchmaker', a protein that promotes the formation of a stable complex between two or more DNA-binding proteins in an ATP-dependent manner without itself being part of a final effector complex. The sequence is that of DNA mismatch repair protein MutL from Petrotoga mobilis (strain DSM 10674 / SJ95).